A 472-amino-acid polypeptide reads, in one-letter code: MKFSRENMKWVFPEIKTTQNFLSPSSLPQEPPLSLRSSANFDLNSKISPSILLIIIILSIIFFISGLLHLLVRFLLTPSSRDREDYFDNVTALQGQLQQLFHLHDSGVDQSFIDTLPVFHYKSIIGLKNYPFDCAVCLCEFETEDKLRLLPKCSHAFHMDCIDTWLLSHSTCPLCRSSLLSDLSSHQDPRSSFLLVLESASDHSSREIGGDRDSAACVAANDDIDVSSAHLGLVGNNDLGSTRIDSGHGDQYLDGELGGSVGKVVPFSVKLGKFRNIDIGEGTSSNNNIGNSSSLDERRCFSMGSYEYIMDEETTLKVHVSTKKQSSKNRGLPGHRTAMSECGFDPTGRLKFSGSGSMRIVEEAAEKNVVERESFSVSKIWLRGKKEKHSKVQGKEDSSLVSSSSGRAFSFRLSNQRNHPDAMIESGCEEDNQKCENSESLETKTPSFARRTMLWLAGRQNKVVHSSSSTNV.

The helical transmembrane segment at 51–71 (ILLIIIILSIIFFISGLLHLL) threads the bilayer. Residues 134–176 (CAVCLCEFETEDKLRLLPKCSHAFHMDCIDTWLLSHSTCPLCR) form an RING-type; atypical zinc finger. The interval 320 to 340 (VSTKKQSSKNRGLPGHRTAMS) is disordered.

Belongs to the RING-type zinc finger family. ATL subfamily.

The protein resides in the membrane. The catalysed reaction is S-ubiquitinyl-[E2 ubiquitin-conjugating enzyme]-L-cysteine + [acceptor protein]-L-lysine = [E2 ubiquitin-conjugating enzyme]-L-cysteine + N(6)-ubiquitinyl-[acceptor protein]-L-lysine.. Its pathway is protein modification; protein ubiquitination. This chain is RING-H2 finger protein ATL13 (ATL13), found in Arabidopsis thaliana (Mouse-ear cress).